The chain runs to 347 residues: Fe(2+) transport protein 1 (347 aa).

The N-terminal stretch at 1-22 is a signal peptide; the sequence is MASNSALLMKTIFLVLIFVSFA. The Extracellular segment spans residues 23–52; that stretch reads ISPATSTAPEECGSESANPCVNKAKALPLK. A helical membrane pass occupies residues 53-73; sequence VIAIFVILIASMIGVGAPLFS. The Cytoplasmic segment spans residues 74–84; the sequence is RNVSFLQPDGN. A helical transmembrane segment spans residues 85–105; sequence IFTIIKCFASGIILGTGFMHV. Over 106–125 the chain is Extracellular; it reads LPDSFEMLSSICLEENPWHK. Residues 126 to 146 form a helical membrane-spanning segment; it reads FPFSGFLAMLSGLITLAIDSM. Topologically, residues 147-192 are cytoplasmic; it reads ATSLYTSKNAVGIMPHGHGHGHGPANDVTLPIKEDDSSNAQLLRYR. Residues K154 and K179 each participate in a glycyl lysine isopeptide (Lys-Gly) (interchain with G-Cter in ubiquitin) cross-link. Residues 193 to 213 form a helical membrane-spanning segment; it reads VIAMVLELGIIVHSVVIGLSL. The Extracellular segment spans residues 214 to 224; that stretch reads GATSDTCTIKG. A helical membrane pass occupies residues 225–245; the sequence is LIAALCFHQMFEGMGLGGCIL. Residues 246 to 254 lie on the Cytoplasmic side of the membrane; the sequence is QAEYTNMKK. A helical membrane pass occupies residues 255–275; sequence FVMAFFFAVTTPFGIALGIAL. At 276-286 the chain is on the extracellular side; sequence STVYQDNSPKA. Residues 287–307 form a helical membrane-spanning segment; it reads LITVGLLNACSAGLLIYMALV. The Cytoplasmic segment spans residues 308 to 326; sequence DLLAAEFMGPKLQGSIKMQ. A helical membrane pass occupies residues 327-347; it reads FKCLIAALLGCGGMSIIAKWA.

The protein belongs to the ZIP transporter (TC 2.A.5) family. Interacts with FREE1. Monoubiquitinated on several Lys residues. Monoubiquitination controls trafficking from the plasma membrane and targeting to the vacuole. Expressed in the external cell layers of the root including the lateral branching zone. Also detected in flowers before pollination.

It is found in the cell membrane. It localises to the early endosome. The protein localises to the golgi apparatus. Its subcellular location is the trans-Golgi network. The protein resides in the vacuole. Functionally, high-affinity iron transporter that plays a key role in the uptake of iron from the rhizosphere across the plasma membrane in the root epidermal layer. Acts as the principal regulator of iron homeostasis in planta. Also mediates the heavy metals uptake under iron-deficiency by its ability to transport cobalt, cadmium, manganese and/or zinc ions. This is Fe(2+) transport protein 1 (IRT1) from Arabidopsis thaliana (Mouse-ear cress).